Here is a 149-residue protein sequence, read N- to C-terminus: Histone H2B.3, sperm (149 aa).

The interval 1–57 (MPRSPAKTSPRKGSPRKGSPRKGSPSRKASPKRGGKGAKRAGKGGRRRRVVKRRRRR) is disordered. 6 consecutive short sequence motifs (SPKK motif) follow at residues 4-7 (SPAK), 9-12 (SPRK), 14-17 (SPRK), 19-22 (SPRK), 24-27 (SPSR), and 30-33 (SPKR). The segment covering 9-20 (SPRKGSPRKGSP) has biased composition (basic residues). Residues S19, S24, and S30 each carry the phosphoserine modification. A compositionally biased stretch (basic residues) spans 29–57 (ASPKRGGKGAKRAGKGGRRRRVVKRRRRR). The O-linked (GlcNAc) serine glycan is linked to S136. K144 is covalently cross-linked (Glycyl lysine isopeptide (Lys-Gly) (interchain with G-Cter in ubiquitin)).

Belongs to the histone H2B family. The nucleosome is a histone octamer containing two molecules each of H2A, H2B, H3 and H4 assembled in one H3-H4 heterotetramer and two H2A-H2B heterodimers. The octamer wraps approximately 147 bp of DNA. Monoubiquitination of Lys-144 gives a specific tag for epigenetic transcriptional activation and is also prerequisite for histone H3 'Lys-4' and 'Lys-79' methylation. Post-translationally, phosphorylated on SPKK motifs 4, 5 and 6; which may regulate DNA binding. Dephosphorylated during maturation of spermatids to mature sperm and rephosphorylated at fertilization. In terms of processing, glcNAcylation at Ser-136 promotes monoubiquitination of Lys-144. It fluctuates in response to extracellular glucose, and associates with transcribed genes.

It localises to the nucleus. Its subcellular location is the chromosome. Functionally, core component of nucleosome. Nucleosomes wrap and compact DNA into chromatin, limiting DNA accessibility to the cellular machineries which require DNA as a template. Histones thereby play a central role in transcription regulation, DNA repair, DNA replication and chromosomal stability. DNA accessibility is regulated via a complex set of post-translational modifications of histones, also called histone code, and nucleosome remodeling. This chain is Histone H2B.3, sperm, found in Parechinus angulosus (Angulate sea urchin).